Here is a 491-residue protein sequence, read N- to C-terminus: Glucose-6-phosphate 1-dehydrogenase (491 aa).

Residues Arg-50, 92–93 (DV), and Lys-147 contribute to the NADP(+) site. 4 residues coordinate substrate: His-177, Lys-181, Glu-215, and Asp-234. His-239 serves as the catalytic Proton acceptor. Lys-339 and Lys-344 together coordinate substrate.

Belongs to the glucose-6-phosphate dehydrogenase family.

It carries out the reaction D-glucose 6-phosphate + NADP(+) = 6-phospho-D-glucono-1,5-lactone + NADPH + H(+). Its pathway is carbohydrate degradation; pentose phosphate pathway; D-ribulose 5-phosphate from D-glucose 6-phosphate (oxidative stage): step 1/3. Its function is as follows. Catalyzes the oxidation of glucose 6-phosphate to 6-phosphogluconolactone. This is Glucose-6-phosphate 1-dehydrogenase from Dickeya dadantii (strain 3937) (Erwinia chrysanthemi (strain 3937)).